The primary structure comprises 217 residues: Adenosylcobinamide-GDP ribazoletransferase (217 aa).

5 helical membrane passes run 6–26 (ALLS…FKCA), 39–61 (GPAA…LLLM), 95–115 (GTGG…STAS), 116–136 (PLQL…VAAF), and 162–182 (ALAV…AVAL).

The protein belongs to the CobS family. The cofactor is Mg(2+).

It localises to the cell membrane. The catalysed reaction is alpha-ribazole + adenosylcob(III)inamide-GDP = adenosylcob(III)alamin + GMP + H(+). The enzyme catalyses alpha-ribazole 5'-phosphate + adenosylcob(III)inamide-GDP = adenosylcob(III)alamin 5'-phosphate + GMP + H(+). It functions in the pathway cofactor biosynthesis; adenosylcobalamin biosynthesis; adenosylcobalamin from cob(II)yrinate a,c-diamide: step 7/7. Joins adenosylcobinamide-GDP and alpha-ribazole to generate adenosylcobalamin (Ado-cobalamin). Also synthesizes adenosylcobalamin 5'-phosphate from adenosylcobinamide-GDP and alpha-ribazole 5'-phosphate. The chain is Adenosylcobinamide-GDP ribazoletransferase from Pyrobaculum calidifontis (strain DSM 21063 / JCM 11548 / VA1).